The primary structure comprises 553 residues: Probable malate:quinone oxidoreductase (553 aa).

The segment at 524 to 553 (PPPKIDLGAPSQATGNAPARPAKASADMAL) is disordered.

Belongs to the MQO family. The cofactor is FAD.

It carries out the reaction (S)-malate + a quinone = a quinol + oxaloacetate. It participates in carbohydrate metabolism; tricarboxylic acid cycle; oxaloacetate from (S)-malate (quinone route): step 1/1. This is Probable malate:quinone oxidoreductase from Burkholderia cenocepacia (strain HI2424).